Reading from the N-terminus, the 390-residue chain is F-box/kelch-repeat protein At4g39753 (390 aa).

Low complexity predominate over residues 1-16; the sequence is MVTFWAETAASAATTS. The segment at 1–33 is disordered; that stretch reads MVTFWAETAASAATTSKGEPPSKKRKTNPSPPP. Residues 32–79 enclose the F-box domain; it reads PPSLLSLPDVLILNCLSRIPKSYYPKLSIVSKTFRDLIISIDLNHARF. Kelch repeat units follow at residues 139 to 192, 193 to 243, 245 to 286, and 288 to 321; these read PLLV…VFDR, KIYV…MIQG, FYVR…WYSC, and PNSFLWFDNEIKNWRLIKGLSSLNHSCRSGLIET.

The polypeptide is F-box/kelch-repeat protein At4g39753 (Arabidopsis thaliana (Mouse-ear cress)).